A 346-amino-acid polypeptide reads, in one-letter code: Probable electron transfer flavoprotein subunit alpha, mitochondrial (346 aa).

285-313 (LYVAVGISGAIQHLAGMKESKMIVAINKD) lines the FAD pocket.

This sequence belongs to the ETF alpha-subunit/FixB family. In terms of assembly, heterodimer of an alpha and a beta subunit. FAD is required as a cofactor.

The protein localises to the mitochondrion matrix. The electron transfer flavoprotein serves as a specific electron acceptor for several dehydrogenases, including five acyl-CoA dehydrogenases, glutaryl-CoA and sarcosine dehydrogenase. It transfers the electrons to the main mitochondrial respiratory chain via ETF-ubiquinone oxidoreductase (ETF dehydrogenase). The protein is Probable electron transfer flavoprotein subunit alpha, mitochondrial (ETF1) of Cryptococcus neoformans var. grubii (Filobasidiella neoformans var. grubii).